Reading from the N-terminus, the 170-residue chain is Putative invertase inhibitor (170 aa).

Positions M1–S14 are cleaved as a signal peptide. Intrachain disulfides connect C22-C37 and C93-C133.

It belongs to the PMEI family. In terms of tissue distribution, expressed in pollen (at protein level). Expressed in pollen.

The chain is Putative invertase inhibitor from Platanus orientalis (Oriental plane-tree).